The primary structure comprises 546 residues: Protein phosphatase 1G (546 aa).

Glycine 2 is lipidated: N-myristoyl glycine. The residue at position 22 (arginine 22) is an Omega-N-methylarginine. Positions 26-505 (PYGFSAMQGW…DNMTCIIICF (480 aa)) constitute a PPM-type phosphatase domain. Residues aspartate 60 and glycine 61 each contribute to the Mn(2+) site. 2 disordered regions span residues 116–139 (QIAG…DVDN) and 161–328 (GQNC…SDSG). Threonine 122 is subject to Phosphothreonine. A compositionally biased stretch (acidic residues) spans 123-139 (EDEDEKEKVADEDDVDN). Serine 183 carries the post-translational modification Phosphoserine. Residues 259-312 (DSEDESDEAEEEEEDSEECSEEEDGYSSEEAENEEDEDDTEEAEEDDEEEEEEM) are compositionally biased toward acidic residues. At lysine 383 the chain carries N6-acetyllysine. Aspartate 441 and aspartate 496 together coordinate Mn(2+). The interval 512 to 546 (ELQPESGKRKLEEVLSTEGAEENGNSDKKKKAKRD) is disordered. Serine 527 carries the post-translational modification Phosphoserine.

This sequence belongs to the PP2C family. Interacts with NOL3; may dephosphorylate NOL3. Requires Mg(2+) as cofactor. Mn(2+) serves as cofactor. In terms of tissue distribution, widely expressed. Most abundant in testis, skeletal muscle, and heart.

The protein localises to the cytoplasm. It is found in the membrane. The enzyme catalyses O-phospho-L-seryl-[protein] + H2O = L-seryl-[protein] + phosphate. It carries out the reaction O-phospho-L-threonyl-[protein] + H2O = L-threonyl-[protein] + phosphate. This chain is Protein phosphatase 1G (PPM1G), found in Homo sapiens (Human).